The primary structure comprises 673 residues: UvrABC system protein B (673 aa).

The Helicase ATP-binding domain occupies 26-414; sequence ANFEAGLAKQ…AGEITELVVR (389 aa). Residue 39 to 46 participates in ATP binding; the sequence is GVTGSGKT. Positions 92–115 match the Beta-hairpin motif; the sequence is YYDYYQPEAYVPSSDTFIEKDSSI. A Helicase C-terminal domain is found at 431-597; that stretch reads QVDDLMSEVH…SVARPISDIM (167 aa). Positions 601–626 are disordered; sequence REDAAEKKAGKGRSKSRQVAEEPADY. Positions 635–670 constitute a UVR domain; sequence AGKLKALEQKMYQHAKDLEFEAAAQIRDQILKLKAA.

This sequence belongs to the UvrB family. Forms a heterotetramer with UvrA during the search for lesions. Interacts with UvrC in an incision complex.

The protein localises to the cytoplasm. In terms of biological role, the UvrABC repair system catalyzes the recognition and processing of DNA lesions. A damage recognition complex composed of 2 UvrA and 2 UvrB subunits scans DNA for abnormalities. Upon binding of the UvrA(2)B(2) complex to a putative damaged site, the DNA wraps around one UvrB monomer. DNA wrap is dependent on ATP binding by UvrB and probably causes local melting of the DNA helix, facilitating insertion of UvrB beta-hairpin between the DNA strands. Then UvrB probes one DNA strand for the presence of a lesion. If a lesion is found the UvrA subunits dissociate and the UvrB-DNA preincision complex is formed. This complex is subsequently bound by UvrC and the second UvrB is released. If no lesion is found, the DNA wraps around the other UvrB subunit that will check the other stand for damage. The chain is UvrABC system protein B from Xanthomonas campestris pv. campestris (strain 8004).